The sequence spans 1280 residues: Ankyrin repeat and sterile alpha motif domain-containing protein 1B (1280 aa).

7 ANK repeats span residues 2–31 (GKEQ…GLLG), 57–86 (SGYT…STNV), 90–119 (KGCF…SHSR), 126–155 (EKET…DPSM), 159–188 (RGET…NLMS), 192–221 (RKHT…DVNT), and 224–253 (EKGS…DANI). Disordered stretches follow at residues 299 to 322 (RHRP…LRHK), 361 to 399 (MESF…EEKS), 479 to 573 (SVSD…STGS), 704 to 723 (NGEA…SNTG), and 755 to 791 (SNLV…PSFT). A compositionally biased stretch (basic and acidic residues) spans 482–491 (DAERGNHGDD). Composition is skewed to polar residues over residues 520–550 (KQRT…SSLG), 707–723 (ARSN…SNTG), and 770–782 (SRGQ…SSPS). SAM domains lie at 824 to 890 (CPVQ…LPRV) and 898 to 963 (NNPT…RLHE). 2 disordered regions span residues 960–994 (RLHE…LSQA) and 1208–1243 (GSST…MDQK). Over residues 980-994 (GNHTPPQLSPSLSQA) the composition is skewed to polar residues. The region spanning 1071–1223 (IFQSCDYEAY…ESFDSKPSKP (153 aa)) is the PID domain.

Its subcellular location is the cytoplasm. The protein is Ankyrin repeat and sterile alpha motif domain-containing protein 1B (anks1b) of Danio rerio (Zebrafish).